The following is a 169-amino-acid chain: S-ribosylhomocysteine lyase (169 aa).

Fe cation-binding residues include H54, H58, and C129.

This sequence belongs to the LuxS family. As to quaternary structure, homodimer. Fe cation is required as a cofactor.

The enzyme catalyses S-(5-deoxy-D-ribos-5-yl)-L-homocysteine = (S)-4,5-dihydroxypentane-2,3-dione + L-homocysteine. Functionally, involved in the synthesis of autoinducer 2 (AI-2) which is secreted by bacteria and is used to communicate both the cell density and the metabolic potential of the environment. The regulation of gene expression in response to changes in cell density is called quorum sensing. Catalyzes the transformation of S-ribosylhomocysteine (RHC) to homocysteine (HC) and 4,5-dihydroxy-2,3-pentadione (DPD). This chain is S-ribosylhomocysteine lyase, found in Actinobacillus pleuropneumoniae serotype 5b (strain L20).